The following is a 198-amino-acid chain: MRAFVVRARAAPVDSQQFLAAIGHEAHTEILAHTLMNTIFVAQSHRDDVVVYLVLESTQDFSRTICFRSNELGHIGGFHEQNLTNKIAKALTVSKGMAKEQLREVEAGITVRTVSFEKLIQELAEDYQLYMLEKKGTPVRDIEFAANPCFLLTDHIPMPKKSFNSLKRLGTQHINLGPKMLFASQCVVLIHNELDMRL.

Residues L132 and C186 each contribute to the S-adenosyl-L-methionine site.

It belongs to the methyltransferase superfamily. TrmY family.

The protein resides in the cytoplasm. The protein is Putative pseudouridine methyltransferase of Shewanella frigidimarina (strain NCIMB 400).